Here is a 403-residue protein sequence, read N- to C-terminus: Sex hormone-binding globulin (403 aa).

An N-terminal signal peptide occupies residues 1–30 (MEKGEVASLRCRLLLLLLLLTLPPTHQGRT). Laminin G-like domains lie at 46–218 (KYLS…LGNC) and 225–391 (GLFF…THSC). Cysteine 194 and cysteine 218 are disulfide-bonded. The N-linked (GlcNAc...) asparagine glycan is linked to asparagine 274. The cysteines at positions 363 and 391 are disulfide-linked. N-linked (GlcNAc...) asparagine glycosylation occurs at asparagine 397.

As to quaternary structure, homodimer. As to expression, isoform 2 is only expressed in the liver.

It is found in the secreted. Its function is as follows. Functions as an androgen transport protein, but may also be involved in receptor mediated processes. Each dimer binds one molecule of steroid. Specific for 5-alpha-dihydrotestosterone, testosterone, and 17-beta-estradiol. Regulates the plasma metabolic clearance rate of steroid hormones by controlling their plasma concentration. The chain is Sex hormone-binding globulin (Shbg) from Rattus norvegicus (Rat).